Consider the following 369-residue polypeptide: uncharacterized protein (369 aa).

Residue lysine 184 is modified to N6-(pyridoxal phosphate)lysine.

It belongs to the class-V pyridoxal-phosphate-dependent aminotransferase family. Pyridoxal 5'-phosphate serves as cofactor.

This is an uncharacterized protein from Helicobacter pylori (strain ATCC 700392 / 26695) (Campylobacter pylori).